We begin with the raw amino-acid sequence, 160 residues long: UPF0178 protein XC_1827 (160 aa).

Belongs to the UPF0178 family.

This is UPF0178 protein XC_1827 from Xanthomonas campestris pv. campestris (strain 8004).